A 189-amino-acid polypeptide reads, in one-letter code: Prostaglandin-H2 D-isomerase (189 aa).

The N-terminal stretch at Met-1 to Ala-24 is a signal peptide. A Pyrrolidone carboxylic acid modification is found at Gln-25. A glycan (N-linked (GlcNAc...) asparagine) is linked at Asn-49. The Nucleophile role is filled by Cys-63. N-linked (GlcNAc...) asparagine glycosylation occurs at Asn-76. A disulfide bridge links Cys-87 with Cys-184.

The protein belongs to the calycin superfamily. Lipocalin family. In terms of assembly, monomer. Abundant in the brain and CNS, where it is expressed in tissues of the blood-brain barrier and secreted into the cerebro-spinal fluid.

The protein localises to the rough endoplasmic reticulum. It localises to the nucleus membrane. Its subcellular location is the golgi apparatus. It is found in the cytoplasm. The protein resides in the perinuclear region. The protein localises to the secreted. It carries out the reaction prostaglandin H2 = prostaglandin D2. Its function is as follows. Catalyzes the conversion of PGH2 to PGD2, a prostaglandin involved in smooth muscle contraction/relaxation and a potent inhibitor of platelet aggregation. Involved in a variety of CNS functions, such as sedation, NREM sleep and PGE2-induced allodynia, and may have an anti-apoptotic role in oligodendrocytes. Binds small non-substrate lipophilic molecules, including biliverdin, bilirubin, retinal, retinoic acid and thyroid hormone, and may act as a scavenger for harmful hydrophobic molecules and as a secretory retinoid and thyroid hormone transporter. Possibly involved in development and maintenance of the blood-brain, blood-retina, blood-aqueous humor and blood-testis barrier. It is likely to play important roles in both maturation and maintenance of the central nervous system and male reproductive system. Involved in PLA2G3-dependent maturation of mast cells. PLA2G3 is secreted by immature mast cells and acts on nearby fibroblasts upstream to PTDGS to synthesize PGD2, which in turn promotes mast cell maturation and degranulation via PTGDR. The chain is Prostaglandin-H2 D-isomerase (PTGDS) from Sus scrofa (Pig).